The chain runs to 297 residues: GTPase Era (297 aa).

One can recognise an Era-type G domain in the interval 3-171 (KSGFVSIVGR…IKVIQNYLEE (169 aa)). The interval 11–18 (GRPNVGKS) is G1. 11 to 18 (GRPNVGKS) is a GTP binding site. The tract at residues 37–41 (QTTRN) is G2. Residues 58-61 (DTPG) form a G3 region. Residues 58-62 (DTPGI) and 120-123 (NKID) contribute to the GTP site. Positions 120–123 (NKID) are G4. Positions 150 to 152 (ISA) are G5. A KH type-2 domain is found at 194–280 (IREKVLHYLN…NLQLWVKVKE (87 aa)).

This sequence belongs to the TRAFAC class TrmE-Era-EngA-EngB-Septin-like GTPase superfamily. Era GTPase family. In terms of assembly, monomer.

It localises to the cytoplasm. The protein localises to the cell membrane. In terms of biological role, an essential GTPase that binds both GDP and GTP, with rapid nucleotide exchange. Plays a role in 16S rRNA processing and 30S ribosomal subunit biogenesis and possibly also in cell cycle regulation and energy metabolism. The chain is GTPase Era from Clostridioides difficile (strain 630) (Peptoclostridium difficile).